The primary structure comprises 491 residues: Cysteine--tRNA ligase (491 aa).

Residue Cys29 participates in Zn(2+) binding. The short motif at 31-41 is the 'HIGH' region element; it reads PTVYDFAHIGN. Zn(2+) contacts are provided by Cys227, His252, and Glu256. The 'KMSKS' region motif lies at 285 to 289; sequence KMSKS. Lys288 contacts ATP.

Belongs to the class-I aminoacyl-tRNA synthetase family. In terms of assembly, monomer. Zn(2+) is required as a cofactor.

The protein localises to the cytoplasm. It catalyses the reaction tRNA(Cys) + L-cysteine + ATP = L-cysteinyl-tRNA(Cys) + AMP + diphosphate. The sequence is that of Cysteine--tRNA ligase from Rhodopseudomonas palustris (strain TIE-1).